A 307-amino-acid polypeptide reads, in one-letter code: Ribosomal RNA small subunit methyltransferase H (307 aa).

Residues 34–36 (GGH), Asp54, Phe79, Asp101, and Gln108 each bind S-adenosyl-L-methionine.

Belongs to the methyltransferase superfamily. RsmH family.

Its subcellular location is the cytoplasm. The enzyme catalyses cytidine(1402) in 16S rRNA + S-adenosyl-L-methionine = N(4)-methylcytidine(1402) in 16S rRNA + S-adenosyl-L-homocysteine + H(+). Its function is as follows. Specifically methylates the N4 position of cytidine in position 1402 (C1402) of 16S rRNA. The sequence is that of Ribosomal RNA small subunit methyltransferase H from Ruthia magnifica subsp. Calyptogena magnifica.